The following is a 502-amino-acid chain: Carbon catabolite-derepressing protein kinase (502 aa).

One can recognise a Protein kinase domain in the interval 14–269 (YYLGKILGVG…IGEIRKHSWF (256 aa)). ATP contacts are provided by residues 20-28 (LGVGTFAKV) and lysine 43. Aspartate 140 functions as the Proton acceptor in the catalytic mechanism. Residue threonine 173 is modified to Phosphothreonine; by autocatalysis. In terms of domain architecture, UBA spans 290 to 330 (MIDEDTLRDVVKLGYDKDHVCESLCNRLQNEETVAYYLLLD). The KA1 domain maps to 453 to 501 (NSRLPAVIKFEIQLYKTKDDKYLLDMQRVTGPQLLFLEFCAAFLTNLRV).

This sequence belongs to the protein kinase superfamily. CAMK Ser/Thr protein kinase family. SNF1 subfamily.

The enzyme catalyses L-seryl-[protein] + ATP = O-phospho-L-seryl-[protein] + ADP + H(+). The catalysed reaction is L-threonyl-[protein] + ATP = O-phospho-L-threonyl-[protein] + ADP + H(+). Essential for release from glucose repression. The sequence is that of Carbon catabolite-derepressing protein kinase (RKIN1) from Secale cereale (Rye).